The chain runs to 126 residues: Aspartate 1-decarboxylase (126 aa).

Catalysis depends on Ser-25, which acts as the Schiff-base intermediate with substrate; via pyruvic acid. Ser-25 is modified (pyruvic acid (Ser)). Position 57 (Thr-57) interacts with substrate. The active-site Proton donor is Tyr-58. 73–75 contacts substrate; the sequence is GAA.

Belongs to the PanD family. Heterooctamer of four alpha and four beta subunits. Pyruvate is required as a cofactor. In terms of processing, is synthesized initially as an inactive proenzyme, which is activated by self-cleavage at a specific serine bond to produce a beta-subunit with a hydroxyl group at its C-terminus and an alpha-subunit with a pyruvoyl group at its N-terminus.

It is found in the cytoplasm. The enzyme catalyses L-aspartate + H(+) = beta-alanine + CO2. The protein operates within cofactor biosynthesis; (R)-pantothenate biosynthesis; beta-alanine from L-aspartate: step 1/1. Its function is as follows. Catalyzes the pyruvoyl-dependent decarboxylation of aspartate to produce beta-alanine. This Marinomonas sp. (strain MWYL1) protein is Aspartate 1-decarboxylase.